The sequence spans 228 residues: Translation initiation factor 6 (228 aa).

Belongs to the eIF-6 family.

Functionally, binds to the 50S ribosomal subunit and prevents its association with the 30S ribosomal subunit to form the 70S initiation complex. The protein is Translation initiation factor 6 of Thermococcus onnurineus (strain NA1).